Here is a 304-residue protein sequence, read N- to C-terminus: HPr kinase/phosphorylase (304 aa).

Catalysis depends on residues histidine 136 and lysine 157. 151–158 (GESGIGKS) contacts ATP. Serine 158 serves as a coordination point for Mg(2+). Aspartate 175 (proton acceptor; for phosphorylation activity. Proton donor; for dephosphorylation activity) is an active-site residue. Residues 198 to 207 (LEVRGIGIID) are important for the catalytic mechanism of both phosphorylation and dephosphorylation. Glutamate 199 provides a ligand contact to Mg(2+). Arginine 240 is a catalytic residue. An important for the catalytic mechanism of dephosphorylation region spans residues 261–266 (PVRPGR).

This sequence belongs to the HPrK/P family. In terms of assembly, homohexamer. It depends on Mg(2+) as a cofactor.

The enzyme catalyses [HPr protein]-L-serine + ATP = [HPr protein]-O-phospho-L-serine + ADP + H(+). The catalysed reaction is [HPr protein]-O-phospho-L-serine + phosphate + H(+) = [HPr protein]-L-serine + diphosphate. Catalyzes the ATP- as well as the pyrophosphate-dependent phosphorylation of a specific serine residue in HPr, a phosphocarrier protein of the phosphoenolpyruvate-dependent sugar phosphotransferase system (PTS). HprK/P also catalyzes the pyrophosphate-producing, inorganic phosphate-dependent dephosphorylation (phosphorolysis) of seryl-phosphorylated HPr (P-Ser-HPr). The two antagonistic activities of HprK/P are regulated by several intracellular metabolites, which change their concentration in response to the absence or presence of rapidly metabolisable carbon sources (glucose, fructose, etc.) in the growth medium. Therefore, by controlling the phosphorylation state of HPr, HPrK/P is a sensor enzyme that plays a major role in the regulation of carbon metabolism and sugar transport: it mediates carbon catabolite repression (CCR), and regulates PTS-catalyzed carbohydrate uptake and inducer exclusion. This chain is HPr kinase/phosphorylase, found in Clostridium botulinum (strain Alaska E43 / Type E3).